The primary structure comprises 161 residues: Large ribosomal subunit protein bL9 (161 aa).

Belongs to the bacterial ribosomal protein bL9 family.

Its function is as follows. Binds to the 23S rRNA. The polypeptide is Large ribosomal subunit protein bL9 (Protochlamydia amoebophila (strain UWE25)).